A 332-amino-acid chain; its full sequence is UDP-N-acetylenolpyruvoylglucosamine reductase (332 aa).

The FAD-binding PCMH-type domain maps to 55–221 (VGGAADLYVA…TQATLQLAPG (167 aa)). Arg200 is an active-site residue. Catalysis depends on Ser251, which acts as the Proton donor. Glu321 is a catalytic residue.

It belongs to the MurB family. Requires FAD as cofactor.

The protein localises to the cytoplasm. The enzyme catalyses UDP-N-acetyl-alpha-D-muramate + NADP(+) = UDP-N-acetyl-3-O-(1-carboxyvinyl)-alpha-D-glucosamine + NADPH + H(+). The protein operates within cell wall biogenesis; peptidoglycan biosynthesis. Functionally, cell wall formation. This is UDP-N-acetylenolpyruvoylglucosamine reductase from Nostoc punctiforme (strain ATCC 29133 / PCC 73102).